A 328-amino-acid polypeptide reads, in one-letter code: Phosphate acyltransferase (328 aa).

This sequence belongs to the PlsX family. Homodimer. Probably interacts with PlsY.

It localises to the cytoplasm. It carries out the reaction a fatty acyl-[ACP] + phosphate = an acyl phosphate + holo-[ACP]. Its pathway is lipid metabolism; phospholipid metabolism. Catalyzes the reversible formation of acyl-phosphate (acyl-PO(4)) from acyl-[acyl-carrier-protein] (acyl-ACP). This enzyme utilizes acyl-ACP as fatty acyl donor, but not acyl-CoA. The sequence is that of Phosphate acyltransferase from Staphylococcus aureus (strain MSSA476).